The chain runs to 295 residues: Protoheme IX farnesyltransferase (295 aa).

A run of 9 helical transmembrane segments spans residues 30-50 (LVVLTGVTGIIIAPGNIHPLI), 51-71 (AVISTLCIALGSGAAGAINMW), 93-115 (ISRSSALEVGLVLSFISVTIMMI), 119-136 (YISGILLAISIGFYIYVY), 148-168 (IVIGGAAGALPPIIGWTSVTG), 175-195 (LVLFLIIFMWTPPHFWALSLL), 219-239 (IHILVYSILLFPITLLPGLFL), 244-264 (LYEITAIPLGLMFVVQAFQVF), and 275-295 (MFTYSIIYLFILFTCIMLSSF).

It belongs to the UbiA prenyltransferase family. Protoheme IX farnesyltransferase subfamily.

It is found in the cell inner membrane. The enzyme catalyses heme b + (2E,6E)-farnesyl diphosphate + H2O = Fe(II)-heme o + diphosphate. The protein operates within porphyrin-containing compound metabolism; heme O biosynthesis; heme O from protoheme: step 1/1. Converts heme B (protoheme IX) to heme O by substitution of the vinyl group on carbon 2 of heme B porphyrin ring with a hydroxyethyl farnesyl side group. In Ehrlichia ruminantium (strain Gardel), this protein is Protoheme IX farnesyltransferase.